The sequence spans 155 residues: Small ribosomal subunit protein uS7c (155 aa).

It belongs to the universal ribosomal protein uS7 family. In terms of assembly, part of the 30S ribosomal subunit.

Its subcellular location is the plastid. It localises to the chloroplast. One of the primary rRNA binding proteins, it binds directly to 16S rRNA where it nucleates assembly of the head domain of the 30S subunit. This is Small ribosomal subunit protein uS7c (rps7) from Pinus koraiensis (Korean pine).